A 114-amino-acid chain; its full sequence is Large ribosomal subunit protein bL20c (114 aa).

It belongs to the bacterial ribosomal protein bL20 family.

It is found in the plastid. It localises to the chloroplast. Binds directly to 23S ribosomal RNA and is necessary for the in vitro assembly process of the 50S ribosomal subunit. It is not involved in the protein synthesizing functions of that subunit. In Trieres chinensis (Marine centric diatom), this protein is Large ribosomal subunit protein bL20c (rpl20).